The sequence spans 238 residues: Thrombin-like enzyme halystase (238 aa).

The Peptidase S1 domain occupies 1–229 (IIGGDECNIN…HLDWIKSIIA (229 aa)). Cystine bridges form between Cys-7–Cys-141, Cys-28–Cys-44, Cys-76–Cys-236, Cys-120–Cys-190, Cys-152–Cys-169, and Cys-180–Cys-205. His-43 acts as the Charge relay system in catalysis. Asn-81 is a glycosylation site (N-linked (GlcNAc...) asparagine). Asp-88 functions as the Charge relay system in the catalytic mechanism. An N-linked (GlcNAc...) asparagine glycan is attached at Asn-100. Residue Ser-184 is the Charge relay system of the active site.

It belongs to the peptidase S1 family. Snake venom subfamily. In terms of assembly, monomer. Expressed by the venom gland.

The protein resides in the secreted. Inhibited by diisopropylfluorophosphate (DFP), PMSF and leupeptin. In terms of biological role, thrombin-like snake venom serine protease. Cleaves fibrinogen (beta chain of fibrinogen (FGB) and more slowly alpha chain (FGA)) without inducing fibrin clotting and cleaves kininogen to produce bradykinin (KNG), resulting in the reduction of blood pressure. This is Thrombin-like enzyme halystase from Gloydius blomhoffii (Mamushi).